Here is a 412-residue protein sequence, read N- to C-terminus: Glucose-1-phosphate adenylyltransferase (412 aa).

Alpha-D-glucose 1-phosphate contacts are provided by residues G163, 179-180, and S197; that span reads EK.

It belongs to the bacterial/plant glucose-1-phosphate adenylyltransferase family. As to quaternary structure, homotetramer.

It catalyses the reaction alpha-D-glucose 1-phosphate + ATP + H(+) = ADP-alpha-D-glucose + diphosphate. It participates in glycan biosynthesis; glycogen biosynthesis. Its function is as follows. Involved in the biosynthesis of ADP-glucose, a building block required for the elongation reactions to produce glycogen. Catalyzes the reaction between ATP and alpha-D-glucose 1-phosphate (G1P) to produce pyrophosphate and ADP-Glc. This is Glucose-1-phosphate adenylyltransferase from Frankia casuarinae (strain DSM 45818 / CECT 9043 / HFP020203 / CcI3).